Reading from the N-terminus, the 543-residue chain is CTP synthase (543 aa).

The interval M1–I265 is amidoligase domain. A CTP-binding site is contributed by S13. S13 contacts UTP. Position 14–19 (S14–L19) interacts with ATP. Residue Y54 participates in L-glutamine binding. D71 contacts ATP. Mg(2+) is bound by residues D71 and E139. Residues D146–E148, K186–Q191, and K222 each bind CTP. UTP-binding positions include K186 to Q191 and K222. R238–A240 provides a ligand contact to ATP. One can recognise a Glutamine amidotransferase type-1 domain in the interval T291 to L542. L-glutamine is bound at residue G353. The active-site Nucleophile; for glutamine hydrolysis is the C380. Residues F381 to Q384, E404, and R470 each bind L-glutamine. Catalysis depends on residues H515 and E517.

Belongs to the CTP synthase family. As to quaternary structure, homotetramer.

The enzyme catalyses UTP + L-glutamine + ATP + H2O = CTP + L-glutamate + ADP + phosphate + 2 H(+). The catalysed reaction is L-glutamine + H2O = L-glutamate + NH4(+). It carries out the reaction UTP + NH4(+) + ATP = CTP + ADP + phosphate + 2 H(+). Its pathway is pyrimidine metabolism; CTP biosynthesis via de novo pathway; CTP from UDP: step 2/2. Its activity is regulated as follows. Allosterically activated by GTP, when glutamine is the substrate; GTP has no effect on the reaction when ammonia is the substrate. The allosteric effector GTP functions by stabilizing the protein conformation that binds the tetrahedral intermediate(s) formed during glutamine hydrolysis. Inhibited by the product CTP, via allosteric rather than competitive inhibition. Catalyzes the ATP-dependent amination of UTP to CTP with either L-glutamine or ammonia as the source of nitrogen. Regulates intracellular CTP levels through interactions with the four ribonucleotide triphosphates. The protein is CTP synthase of Rhodopseudomonas palustris (strain BisB5).